The chain runs to 430 residues: KICSTOR complex protein kaptin (430 aa).

The disordered stretch occupies residues 410-430; it reads RKHQQGLGDRVGPRPVEHPAS. Positions 420 to 430 are enriched in basic and acidic residues; sequence VGPRPVEHPAS.

In terms of assembly, part of the KICSTOR complex composed of KPTN, ITFG2, KICS2 and SZT2. SZT2 probably serves as a link between the other three proteins in the KICSTOR complex and mediates the direct interaction with the GATOR1 complex. May associate with F-actin filaments.

The protein localises to the lysosome membrane. It localises to the cell projection. It is found in the lamellipodium. The protein resides in the stereocilium. Its function is as follows. As part of the KICSTOR complex functions in the amino acid-sensing branch of the TORC1 signaling pathway. Recruits, in an amino acid-independent manner, the GATOR1 complex to the lysosomal membranes and allows its interaction with GATOR2 and the RAG GTPases. Functions upstream of the RAG GTPases and is required to negatively regulate mTORC1 signaling in absence of amino acids. In absence of the KICSTOR complex mTORC1 is constitutively localized to the lysosome and activated. The KICSTOR complex is also probably involved in the regulation of mTORC1 by glucose. This chain is KICSTOR complex protein kaptin, found in Mus musculus (Mouse).